Here is a 366-residue protein sequence, read N- to C-terminus: Phospho-N-acetylmuramoyl-pentapeptide-transferase (366 aa).

A run of 10 helical transmembrane segments spans residues A27–L47, T71–A91, L93–F113, L134–S154, L174–G194, G205–A225, L245–P265, A268–V288, V297–F317, and Q343–L363.

Belongs to the glycosyltransferase 4 family. MraY subfamily. Mg(2+) is required as a cofactor.

It localises to the cell inner membrane. It catalyses the reaction UDP-N-acetyl-alpha-D-muramoyl-L-alanyl-gamma-D-glutamyl-meso-2,6-diaminopimeloyl-D-alanyl-D-alanine + di-trans,octa-cis-undecaprenyl phosphate = di-trans,octa-cis-undecaprenyl diphospho-N-acetyl-alpha-D-muramoyl-L-alanyl-D-glutamyl-meso-2,6-diaminopimeloyl-D-alanyl-D-alanine + UMP. The protein operates within cell wall biogenesis; peptidoglycan biosynthesis. Catalyzes the initial step of the lipid cycle reactions in the biosynthesis of the cell wall peptidoglycan: transfers peptidoglycan precursor phospho-MurNAc-pentapeptide from UDP-MurNAc-pentapeptide onto the lipid carrier undecaprenyl phosphate, yielding undecaprenyl-pyrophosphoryl-MurNAc-pentapeptide, known as lipid I. In Sinorhizobium fredii (strain NBRC 101917 / NGR234), this protein is Phospho-N-acetylmuramoyl-pentapeptide-transferase.